The primary structure comprises 682 residues: Activating transcription factor 7-interacting protein 2 (682 aa).

Residues 120–148 (SRTTESPSRVFTEEAKDSLNTSENDSEHQ) are disordered. Polar residues predominate over residues 137-148 (SLNTSENDSEHQ). A coiled-coil region spans residues 328–378 (EIYSINYELFDKKLKELNQRIGKTECRNKHEGIADKLLAKIAKLQRRIKTV). Ser-416 bears the Phosphoserine mark. Composition is skewed to polar residues over residues 418–451 (IEKSSVNYEPSNPSEKGSKKINLSSDQNKSVSES) and 462–490 (ESPNLTTPITSNPTDTRKITSGNSSNSPN). Disordered regions lie at residues 418 to 491 (IEKS…SPNA) and 513 to 538 (NCNTESPVSPLESHSKAASNSKETTP). Residues Ser-488 and Ser-521 each carry the phosphoserine modification. A compositionally biased stretch (polar residues) spans 528-538 (KAASNSKETTP). A Fibronectin type-III domain is found at 575–680 (PPQKPELKVK…IKSIPGFSEN (106 aa)).

Belongs to the MCAF family. Interacts with MBD1, SETDB1 and SP1. Probably forms a complex with SETDB1 and MBD1.

The protein localises to the nucleus. Recruiter that couples transcriptional factors to general transcription apparatus and thereby modulates transcription regulation and chromatin formation. Can both act as an activator or a repressor depending on the context. Mediates MBD1-dependent transcriptional repression, probably by recruiting complexes containing SETDB1. The complex formed with MBD1 and SETDB1 represses transcription and probably couples DNA methylation and histone H3 'Lys-9' trimethylation (H3K9me3) activity. This is Activating transcription factor 7-interacting protein 2 (ATF7IP2) from Homo sapiens (Human).